Consider the following 595-residue polypeptide: Chaperone protein HscA homolog (595 aa).

This sequence belongs to the heat shock protein 70 family.

Its function is as follows. Chaperone involved in the maturation of iron-sulfur cluster-containing proteins. Has a low intrinsic ATPase activity which is markedly stimulated by HscB. The chain is Chaperone protein HscA homolog from Rickettsia africae (strain ESF-5).